The following is a 77-amino-acid chain: MKLMIFTGLVLFAIVSLIEAQAENGKPCLPEYKVCTHAPGNCCSDLVCDCYGRYKSGAQIGRNCFCLQKGVIYKREN.

The N-terminal stretch at 1–20 (MKLMIFTGLVLFAIVSLIEA) is a signal peptide. Residues 21–26 (QAENGK) constitute a propeptide that is removed on maturation.

This sequence belongs to the neurotoxin 19 (CSTX) family. 08 (U8-Lctx) subfamily. Contains 4 disulfide bonds. Expressed by the venom gland.

The protein localises to the secreted. The polypeptide is U8-lycotoxin-Ls1o (Lycosa singoriensis (Wolf spider)).